Here is a 660-residue protein sequence, read N- to C-terminus: UvrABC system protein B (660 aa).

In terms of domain architecture, Helicase ATP-binding spans 26–413 (AGINEGKKHQ…TPEMVEQIIR (388 aa)). Residue 39-46 (GATGTGKT) participates in ATP binding. The short motif at 92–115 (YYDYYQPEAYVPQSDTYIEKDASI) is the Beta-hairpin element. Residues 430–592 (QIDDLIGEIN…ITPKTIEKRI (163 aa)) form the Helicase C-terminal domain. The UVR domain maps to 624–659 (EAVIERMEAEMKEAAKTLNFERAAELRDLILELKAE).

This sequence belongs to the UvrB family. As to quaternary structure, forms a heterotetramer with UvrA during the search for lesions. Interacts with UvrC in an incision complex.

Its subcellular location is the cytoplasm. In terms of biological role, the UvrABC repair system catalyzes the recognition and processing of DNA lesions. A damage recognition complex composed of 2 UvrA and 2 UvrB subunits scans DNA for abnormalities. Upon binding of the UvrA(2)B(2) complex to a putative damaged site, the DNA wraps around one UvrB monomer. DNA wrap is dependent on ATP binding by UvrB and probably causes local melting of the DNA helix, facilitating insertion of UvrB beta-hairpin between the DNA strands. Then UvrB probes one DNA strand for the presence of a lesion. If a lesion is found the UvrA subunits dissociate and the UvrB-DNA preincision complex is formed. This complex is subsequently bound by UvrC and the second UvrB is released. If no lesion is found, the DNA wraps around the other UvrB subunit that will check the other stand for damage. The protein is UvrABC system protein B of Halalkalibacterium halodurans (strain ATCC BAA-125 / DSM 18197 / FERM 7344 / JCM 9153 / C-125) (Bacillus halodurans).